The chain runs to 146 residues: COP9 signalosome complex subunit 9 (146 aa).

Residues 1-107 enclose the PCI domain; the sequence is MDSYKTQWLT…SVAREVKVLQ (107 aa).

As to quaternary structure, component of a COP9 signalosome-like (CSN) complex.

The protein localises to the cytoplasm. It is found in the nucleus. Component of the COP9 signalosome (CSN) complex that acts as a regulator of the ubiquitin (Ubl) conjugation pathway by mediating the deneddylation of the cullin subunit of SCF-type E3 ubiquitin-protein ligase complexes. The CSN complex is involved in the regulation of the mating pheromone response. The sequence is that of COP9 signalosome complex subunit 9 (CSN9) from Candida glabrata (strain ATCC 2001 / BCRC 20586 / JCM 3761 / NBRC 0622 / NRRL Y-65 / CBS 138) (Yeast).